The chain runs to 947 residues: Translation initiation factor IF-2 (947 aa).

A disordered region spans residues 61-284; sequence IQANQPAKNP…TAKNNKSHKI (224 aa). Positions 151–169 are enriched in basic and acidic residues; that stretch reads QIEKAKQKLQEIQKSREAL. The span at 175 to 188 shows a compositional bias: low complexity; sequence SNANNANSTNNANN. Residues 189–206 are compositionally biased toward basic and acidic residues; it reads AKKEISEVKKQEQEIKRH. The span at 207–218 shows a compositional bias: basic residues; sequence ENIKRRTGFRVI. Basic and acidic residues predominate over residues 247–262; the sequence is EDIKKEWQEKDKQEAK. Residues 446–615 enclose the tr-type G domain; sequence ERPPVVTIMG…LIQADIMELK (170 aa). Residues 455–462 are G1; sequence GHVDHGKT. 455 to 462 serves as a coordination point for GTP; it reads GHVDHGKT. A G2 region spans residues 480 to 484; that stretch reads GITQH. Residues 501-504 form a G3 region; that stretch reads DTPG. Residues 501–505 and 555–558 each bind GTP; these read DTPGH and NKMD. The tract at residues 555 to 558 is G4; that stretch reads NKMD. A G5 region spans residues 591-593; it reads SAK.

The protein belongs to the TRAFAC class translation factor GTPase superfamily. Classic translation factor GTPase family. IF-2 subfamily.

The protein resides in the cytoplasm. Functionally, one of the essential components for the initiation of protein synthesis. Protects formylmethionyl-tRNA from spontaneous hydrolysis and promotes its binding to the 30S ribosomal subunits. Also involved in the hydrolysis of GTP during the formation of the 70S ribosomal complex. The chain is Translation initiation factor IF-2 from Helicobacter pylori (strain P12).